The following is a 179-amino-acid chain: MGSEAAQLLEAADFAARKHRQQRRKDPEGTPYINHPIGVARILTHEAGITDIVVLQAALLHDTVEDTDTTLDEVELHFGAQVRRLVEEVTDDKTLPKLERKRLQVEQAPHSSPGAKLVKLADKLYNLRDLNRCTPEGWSEHRVQEYFEWAAQVVKGLQGTNRQLEEALKHLFKQRGLTI.

G2 carries the post-translational modification N-acetylglycine. Position 25 is an N6-acetyllysine (K25). The HD domain occupies 32–127; sequence YINHPIGVAR…VKLADKLYNL (96 aa). Residues H35, H61, and D62 each coordinate Mn(2+). Residues E65 and D66 each act as nucleophile in the active site. K97 is modified (N6-acetyllysine). D122 is a Mn(2+) binding site. At K123 the chain carries N6-acetyllysine.

This sequence belongs to the MESH1 family. Requires Mn(2+) as cofactor.

The catalysed reaction is guanosine 3',5'-bis(diphosphate) + H2O = GDP + diphosphate + H(+). In terms of biological role, ppGpp hydrolyzing enzyme involved in starvation response. The sequence is that of Guanosine-3',5'-bis(diphosphate) 3'-pyrophosphohydrolase MESH1 (HDDC3) from Homo sapiens (Human).